We begin with the raw amino-acid sequence, 67 residues long: ATP synthase F(0) complex subunit 8 (67 aa).

The chain crosses the membrane as a helical span at residues 8–24; the sequence is TWFINIVSMILTLFIVF. Lys-54 is subject to N6-acetyllysine; alternate. The residue at position 54 (Lys-54) is an N6-succinyllysine; alternate. At Lys-57 the chain carries N6-acetyllysine.

It belongs to the ATPase protein 8 family. In terms of assembly, component of the ATP synthase complex composed at least of ATP5F1A/subunit alpha, ATP5F1B/subunit beta, ATP5MC1/subunit c (homooctomer), MT-ATP6/subunit a, MT-ATP8/subunit 8, ATP5ME/subunit e, ATP5MF/subunit f, ATP5MG/subunit g, ATP5MK/subunit k, ATP5MJ/subunit j, ATP5F1C/subunit gamma, ATP5F1D/subunit delta, ATP5F1E/subunit epsilon, ATP5PF/subunit F6, ATP5PB/subunit b, ATP5PD/subunit d, ATP5PO/subunit OSCP. ATP synthase complex consists of a soluble F(1) head domain (subunits alpha(3) and beta(3)) - the catalytic core - and a membrane F(0) domain - the membrane proton channel (subunits c, a, 8, e, f, g, k and j). These two domains are linked by a central stalk (subunits gamma, delta, and epsilon) rotating inside the F1 region and a stationary peripheral stalk (subunits F6, b, d, and OSCP). Interacts with PRICKLE3.

It is found in the mitochondrion membrane. Subunit 8, of the mitochondrial membrane ATP synthase complex (F(1)F(0) ATP synthase or Complex V) that produces ATP from ADP in the presence of a proton gradient across the membrane which is generated by electron transport complexes of the respiratory chain. ATP synthase complex consist of a soluble F(1) head domain - the catalytic core - and a membrane F(1) domain - the membrane proton channel. These two domains are linked by a central stalk rotating inside the F(1) region and a stationary peripheral stalk. During catalysis, ATP synthesis in the catalytic domain of F(1) is coupled via a rotary mechanism of the central stalk subunits to proton translocation. In vivo, can only synthesize ATP although its ATP hydrolase activity can be activated artificially in vitro. Part of the complex F(0) domain. This Equus asinus (Donkey) protein is ATP synthase F(0) complex subunit 8.